The primary structure comprises 73 residues: Small ribosomal subunit protein bS18 (73 aa).

This sequence belongs to the bacterial ribosomal protein bS18 family. Part of the 30S ribosomal subunit. Forms a tight heterodimer with protein bS6.

Binds as a heterodimer with protein bS6 to the central domain of the 16S rRNA, where it helps stabilize the platform of the 30S subunit. The chain is Small ribosomal subunit protein bS18 from Prochlorococcus marinus (strain MIT 9313).